The sequence spans 499 residues: Endoglucanase (499 aa).

The first 29 residues, M1 to A29, serve as a signal peptide directing secretion. Residues H65, W69–Y70, Y96, and H131 each bind substrate. E169 (proton donor) is an active-site residue. Y231 contacts substrate. The Nucleophile role is filled by E257. Substrate contacts are provided by residues A263–S264, W291, and K296–E298. The 150-residue stretch at Q350 to N499 folds into the CBM3 domain.

Belongs to the glycosyl hydrolase 5 (cellulase A) family.

The catalysed reaction is Endohydrolysis of (1-&gt;4)-beta-D-glucosidic linkages in cellulose, lichenin and cereal beta-D-glucans.. The sequence is that of Endoglucanase (eglS) from Bacillus subtilis (strain 168).